The following is a 257-amino-acid chain: Imidazole glycerol phosphate synthase subunit HisF (257 aa).

Catalysis depends on residues Asp-11 and Asp-130.

Belongs to the HisA/HisF family. In terms of assembly, heterodimer of HisH and HisF.

It is found in the cytoplasm. It carries out the reaction 5-[(5-phospho-1-deoxy-D-ribulos-1-ylimino)methylamino]-1-(5-phospho-beta-D-ribosyl)imidazole-4-carboxamide + L-glutamine = D-erythro-1-(imidazol-4-yl)glycerol 3-phosphate + 5-amino-1-(5-phospho-beta-D-ribosyl)imidazole-4-carboxamide + L-glutamate + H(+). Its pathway is amino-acid biosynthesis; L-histidine biosynthesis; L-histidine from 5-phospho-alpha-D-ribose 1-diphosphate: step 5/9. Its function is as follows. IGPS catalyzes the conversion of PRFAR and glutamine to IGP, AICAR and glutamate. The HisF subunit catalyzes the cyclization activity that produces IGP and AICAR from PRFAR using the ammonia provided by the HisH subunit. This chain is Imidazole glycerol phosphate synthase subunit HisF, found in Vibrio cholerae serotype O1 (strain ATCC 39541 / Classical Ogawa 395 / O395).